A 526-amino-acid chain; its full sequence is Peptide chain release factor 3 (526 aa).

Positions 9-277 (DKRRTFAIIS…GIVEWAPKPQ (269 aa)) constitute a tr-type G domain. Residues 18–25 (SHPDAGKT), 86–90 (DTPGH), and 140–143 (NKLD) contribute to the GTP site.

Belongs to the TRAFAC class translation factor GTPase superfamily. Classic translation factor GTPase family. PrfC subfamily.

The protein localises to the cytoplasm. Increases the formation of ribosomal termination complexes and stimulates activities of RF-1 and RF-2. It binds guanine nucleotides and has strong preference for UGA stop codons. It may interact directly with the ribosome. The stimulation of RF-1 and RF-2 is significantly reduced by GTP and GDP, but not by GMP. In Shewanella sediminis (strain HAW-EB3), this protein is Peptide chain release factor 3.